The sequence spans 357 residues: 4-hydroxy-3-methylbut-2-en-1-yl diphosphate synthase (flavodoxin) (357 aa).

Residues cysteine 264, cysteine 267, cysteine 299, and glutamate 306 each contribute to the [4Fe-4S] cluster site.

The protein belongs to the IspG family. [4Fe-4S] cluster is required as a cofactor.

It carries out the reaction (2E)-4-hydroxy-3-methylbut-2-enyl diphosphate + oxidized [flavodoxin] + H2O + 2 H(+) = 2-C-methyl-D-erythritol 2,4-cyclic diphosphate + reduced [flavodoxin]. The protein operates within isoprenoid biosynthesis; isopentenyl diphosphate biosynthesis via DXP pathway; isopentenyl diphosphate from 1-deoxy-D-xylulose 5-phosphate: step 5/6. Converts 2C-methyl-D-erythritol 2,4-cyclodiphosphate (ME-2,4cPP) into 1-hydroxy-2-methyl-2-(E)-butenyl 4-diphosphate. The polypeptide is 4-hydroxy-3-methylbut-2-en-1-yl diphosphate synthase (flavodoxin) (Campylobacter jejuni (strain RM1221)).